The following is a 235-amino-acid chain: Leucyl/phenylalanyl-tRNA--protein transferase (235 aa).

This sequence belongs to the L/F-transferase family.

Its subcellular location is the cytoplasm. It catalyses the reaction N-terminal L-lysyl-[protein] + L-leucyl-tRNA(Leu) = N-terminal L-leucyl-L-lysyl-[protein] + tRNA(Leu) + H(+). The enzyme catalyses N-terminal L-arginyl-[protein] + L-leucyl-tRNA(Leu) = N-terminal L-leucyl-L-arginyl-[protein] + tRNA(Leu) + H(+). It carries out the reaction L-phenylalanyl-tRNA(Phe) + an N-terminal L-alpha-aminoacyl-[protein] = an N-terminal L-phenylalanyl-L-alpha-aminoacyl-[protein] + tRNA(Phe). In terms of biological role, functions in the N-end rule pathway of protein degradation where it conjugates Leu, Phe and, less efficiently, Met from aminoacyl-tRNAs to the N-termini of proteins containing an N-terminal arginine or lysine. The polypeptide is Leucyl/phenylalanyl-tRNA--protein transferase (Anaeromyxobacter sp. (strain Fw109-5)).